A 167-amino-acid polypeptide reads, in one-letter code: GTP-dependent dephospho-CoA kinase (167 aa).

Positions 39, 41, 58, 60, and 117 each coordinate GTP.

It belongs to the GTP-dependent DPCK family.

It carries out the reaction 3'-dephospho-CoA + GTP = GDP + CoA + H(+). The protein operates within cofactor biosynthesis; coenzyme A biosynthesis. Its function is as follows. Catalyzes the GTP-dependent phosphorylation of the 3'-hydroxyl group of dephosphocoenzyme A to form coenzyme A (CoA). The polypeptide is GTP-dependent dephospho-CoA kinase (Korarchaeum cryptofilum (strain OPF8)).